The following is a 418-amino-acid chain: MRFSGSPSPGPSNSSRWWPLDAGDANTSGDLAGLGEDGGPQADTRNEELAKLEIAVLAVIFVVAVLGNSSVLLALHRTPRKTSRMHLFIRHLSLADLAVAFFQVLPQLGWDITYRFRGPDGLCRVVKHMQVFAMFASAYMLVVMTADRYIAVCHPLKTLQQPARRSRLMIAAAWVLSFVLSTPQYFVFSMVEVSNVTKTYDCWANFIHPWGLPAYVTWMTGSVFVAPVVILGTCYGFICYHIWRKVRGKTAGRQGGPAEGAGESALYRGVLHARCVSSVKTISRAKIRTVKMTFVIVTAYIVCWAPFFIIQMWSAWDKNFSWVESENPATAIPALLASLNSCCNPWIYMFFSGHLLQDCAQSFPCCQNVKRTFTREGSDSMSRRQTSFTNNRSPTNSMGTWKDSPKSSKSIKFIPVST.

A compositionally biased stretch (low complexity) spans 1–15; that stretch reads MRFSGSPSPGPSNSS. The disordered stretch occupies residues 1-20; the sequence is MRFSGSPSPGPSNSSRWWPL. Residues 1–51 are Extracellular-facing; it reads MRFSGSPSPGPSNSSRWWPLDAGDANTSGDLAGLGEDGGPQADTRNEELAK. N-linked (GlcNAc...) asparagine glycosylation is found at asparagine 13 and asparagine 26. The chain crosses the membrane as a helical span at residues 52–75; sequence LEIAVLAVIFVVAVLGNSSVLLAL. Topologically, residues 76–87 are cytoplasmic; the sequence is HRTPRKTSRMHL. The chain crosses the membrane as a helical span at residues 88 to 109; sequence FIRHLSLADLAVAFFQVLPQLG. Over 110 to 124 the chain is Extracellular; sequence WDITYRFRGPDGLCR. Cysteines 123 and 202 form a disulfide. The helical transmembrane segment at 125–146 threads the bilayer; that stretch reads VVKHMQVFAMFASAYMLVVMTA. Residues 147–167 are Cytoplasmic-facing; sequence DRYIAVCHPLKTLQQPARRSR. A helical membrane pass occupies residues 168-189; sequence LMIAAAWVLSFVLSTPQYFVFS. Residues 190–217 are Extracellular-facing; the sequence is MVEVSNVTKTYDCWANFIHPWGLPAYVT. Residue asparagine 195 is glycosylated (N-linked (GlcNAc...) asparagine). Residues 218-238 traverse the membrane as a helical segment; that stretch reads WMTGSVFVAPVVILGTCYGFI. The Cytoplasmic portion of the chain corresponds to 239–293; sequence CYHIWRKVRGKTAGRQGGPAEGAGESALYRGVLHARCVSSVKTISRAKIRTVKMT. A helical membrane pass occupies residues 294–313; sequence FVIVTAYIVCWAPFFIIQMW. The Extracellular portion of the chain corresponds to 314 to 331; sequence SAWDKNFSWVESENPATA. An N-linked (GlcNAc...) asparagine glycan is attached at asparagine 319. Residues 332 to 351 form a helical membrane-spanning segment; sequence IPALLASLNSCCNPWIYMFF. At 352–418 the chain is on the cytoplasmic side; it reads SGHLLQDCAQ…KSIKFIPVST (67 aa). S-palmitoyl cysteine attachment occurs at residues cysteine 365 and cysteine 366. The interval 377–418 is disordered; sequence GSDSMSRRQTSFTNNRSPTNSMGTWKDSPKSSKSIKFIPVST. A compositionally biased stretch (polar residues) spans 383–399; it reads RRQTSFTNNRSPTNSMG. Residue serine 404 is modified to Phosphoserine.

This sequence belongs to the G-protein coupled receptor 1 family. Vasopressin/oxytocin receptor subfamily.

It is found in the cell membrane. In terms of biological role, receptor for arginine vasopressin. The activity of this receptor is mediated by G proteins which activate a phosphatidyl-inositol-calcium second messenger system. This chain is Vasopressin V1a receptor (AVPR1A), found in Ovis aries (Sheep).